A 188-amino-acid polypeptide reads, in one-letter code: Ribose 1,5-bisphosphate phosphokinase PhnN (188 aa).

The protein belongs to the ribose 1,5-bisphosphokinase family.

It carries out the reaction alpha-D-ribose 1,5-bisphosphate + ATP = 5-phospho-alpha-D-ribose 1-diphosphate + ADP. It participates in metabolic intermediate biosynthesis; 5-phospho-alpha-D-ribose 1-diphosphate biosynthesis; 5-phospho-alpha-D-ribose 1-diphosphate from D-ribose 5-phosphate (route II): step 3/3. Its function is as follows. Catalyzes the phosphorylation of ribose 1,5-bisphosphate to 5-phospho-D-ribosyl alpha-1-diphosphate (PRPP). This is Ribose 1,5-bisphosphate phosphokinase PhnN from Dickeya zeae (strain Ech586) (Dickeya dadantii (strain Ech586)).